The chain runs to 345 residues: Acetylserotonin O-methyltransferase (345 aa).

Residues Tyr-147, Trp-164, Asp-210, 235 to 237 (GDF), and Arg-252 each bind S-adenosyl-L-methionine. The active-site Proton donor/acceptor is the His-255. Positions 256, 302, and 306 each coordinate substrate.

Belongs to the class I-like SAM-binding methyltransferase superfamily. Cation-independent O-methyltransferase family. In terms of assembly, homodimer. Highly expressed in pineal gland. In the retina, 10- to 100-fold lower expression compared to pineal gland, if any.

The enzyme catalyses N-acetylserotonin + S-adenosyl-L-methionine = melatonin + S-adenosyl-L-homocysteine + H(+). It participates in aromatic compound metabolism; melatonin biosynthesis; melatonin from serotonin: step 1/2. Its function is as follows. Catalyzes the transfer of a methyl group onto N-acetylserotonin, producing melatonin (N-acetyl-5-methoxytryptamine). This is Acetylserotonin O-methyltransferase (ASMT) from Macaca mulatta (Rhesus macaque).